The following is a 693-amino-acid chain: Lamina-associated polypeptide 2, isoforms alpha/zeta (693 aa).

Residues 5–48 (LEDPSVLTKDKLKSELVANNVTLPAGEQRKDVYVQLYLQHLTAR) form the LEM-like domain. 3 disordered regions span residues 48-113 (RNRP…DVTE), 148-211 (LREQ…LAST), and 227-270 (TRPP…KLAP). A linker region spans residues 49-107 (NRPPLAAGANSKGPPDFSSDEEREPTPVLGSGASVGRGRGAVGRKATKKTDKPRLEDKD). A phosphoserine mark is found at S59, S66, and S67. T74 carries the post-translational modification Phosphothreonine. S79 and S82 each carry phosphoserine. Omega-N-methylarginine occurs at positions 85 and 87. Positions 96-105 (KKTDKPRLED) are enriched in basic and acidic residues. In terms of domain architecture, LEM spans 108-152 (DLDVTELSNEELLDQLVRYGVNPGPIVGTTRKLYEKKLLKLREQG). T153 bears the Phosphothreonine mark. Residues 154–177 (ESRSSTPLPTVSSSAENTRQNGSN) are compositionally biased toward polar residues. 2 positions are modified to phosphoserine: S155 and S158. 2 positions are modified to phosphothreonine: T159 and T163. S165 and S167 each carry phosphoserine. Basic and acidic residues predominate over residues 178 to 190 (DSDRYSDNDEGKK). A Nuclear localization signal motif is present at residues 190–196 (KKEHKKV). S206 carries the N6-acetyllysine modification. Over residues 245–254 (TKRDPPRETC) the composition is skewed to basic and acidic residues. S310 carries the post-translational modification Phosphoserine. Residue R329 is modified to Omega-N-methylarginine. Positions 332-351 (KSRAQPLRAEEPGVSDQSVF) are disordered. Phosphoserine is present on residues S349, S352, S368, S420, and S422. Residues 412–422 (QSSYQDSESLS) show a composition bias toward low complexity. A disordered region spans residues 412–442 (QSSYQDSESLSPPRKVPRLSEKPARGGDSGS). Positions 557-656 (TESCDKHLDL…MGRRYLWLKD (100 aa)) form a coiled coil. Residue K655 is modified to N6-acetyllysine.

The protein belongs to the LEM family. Homooligomer. Interacts with LMNA, BANF1 and RB1 and with chromosomes. Associates directly or indirectly with lamins at specific cell-cycle stages. Interacts with CMTM6. In terms of processing, phosphorylated in a mitose-specific manner.

The protein localises to the nucleus. It is found in the chromosome. May be involved in the structural organization of the nucleus and in the post-mitotic nuclear assembly. Plays an important role, together with LMNA, in the nuclear anchorage of RB1. The protein is Lamina-associated polypeptide 2, isoforms alpha/zeta (Tmpo) of Mus musculus (Mouse).